A 249-amino-acid chain; its full sequence is 2,3-bisphosphoglycerate-dependent phosphoglycerate mutase (249 aa).

Substrate-binding positions include R8 to N15, T21 to G22, R60, E87 to Y90, K98, R114 to R115, and G183 to N184. The Tele-phosphohistidine intermediate role is filled by H9. Residue E87 is the Proton donor/acceptor of the active site.

Belongs to the phosphoglycerate mutase family. BPG-dependent PGAM subfamily.

The enzyme catalyses (2R)-2-phosphoglycerate = (2R)-3-phosphoglycerate. It participates in carbohydrate degradation; glycolysis; pyruvate from D-glyceraldehyde 3-phosphate: step 3/5. In terms of biological role, catalyzes the interconversion of 2-phosphoglycerate and 3-phosphoglycerate. This chain is 2,3-bisphosphoglycerate-dependent phosphoglycerate mutase, found in Caldanaerobacter subterraneus subsp. tengcongensis (strain DSM 15242 / JCM 11007 / NBRC 100824 / MB4) (Thermoanaerobacter tengcongensis).